A 321-amino-acid chain; its full sequence is Methionine import ATP-binding protein MetN (321 aa).

One can recognise an ABC transporter domain in the interval 2-237 (ISIKNVNKYY…NTKGLRKLIG (236 aa)). ATP is bound at residue 34 to 41 (GHSGAGKS).

This sequence belongs to the ABC transporter superfamily. Methionine importer (TC 3.A.1.24) family. As to quaternary structure, the complex is composed of two ATP-binding proteins (MetN), two transmembrane proteins (MetI) and a solute-binding protein (MetQ).

It localises to the cell membrane. It carries out the reaction L-methionine(out) + ATP + H2O = L-methionine(in) + ADP + phosphate + H(+). The enzyme catalyses D-methionine(out) + ATP + H2O = D-methionine(in) + ADP + phosphate + H(+). In terms of biological role, part of the ABC transporter complex MetNIQ involved in methionine import. Responsible for energy coupling to the transport system. This Clostridioides difficile (strain 630) (Peptoclostridium difficile) protein is Methionine import ATP-binding protein MetN.